Consider the following 150-residue polypeptide: Transcriptional regulator MraZ (150 aa).

SpoVT-AbrB domains follow at residues 5 to 51 (VANL…PQPE) and 80 to 123 (ATEC…DEDT).

This sequence belongs to the MraZ family. Forms oligomers.

It is found in the cytoplasm. Its subcellular location is the nucleoid. The sequence is that of Transcriptional regulator MraZ from Thioalkalivibrio sulfidiphilus (strain HL-EbGR7).